The chain runs to 160 residues: Allophycocyanin alpha chain (160 aa).

N4-methylasparagine is present on N70. (2R,3E)-phycocyanobilin is bound at residue C80.

This sequence belongs to the phycobiliprotein family. As to quaternary structure, component of the phycobilisome. Heterodimer of an alpha and a beta chain. Post-translationally, contains one covalently linked phycocyanobilin chromophore.

It is found in the cellular thylakoid membrane. In terms of biological role, light-harvesting photosynthetic bile pigment-protein from the phycobiliprotein complex. Allophycocyanin has a maximum absorption at approximately 650 nanometers. The chain is Allophycocyanin alpha chain (apcA) from Anabaena cylindrica.